The primary structure comprises 3461 residues: Reelin (3461 aa).

Residues 1-26 (MERGCWAPRALVLAVLLLLATLRARA) form the signal peptide. The Reelin domain maps to 27–191 (ATGYYPRFSP…GAPTEATAYS (165 aa)). C41 and C127 are disulfide-bonded. The N-linked (GlcNAc...) asparagine glycan is linked to N141. Cysteines 155 and 179 form a disulfide. 3 N-linked (GlcNAc...) asparagine glycosylation sites follow: N258, N290, and N306. The cysteines at positions 540 and 581 are disulfide-linked. A BNR 1 repeat occupies 593 to 604 (EFSTNHGRSWSL). Cysteines 609 and 614 form a disulfide. Residue N629 is glycosylated (N-linked (GlcNAc...) asparagine). One can recognise an EGF-like 1 domain in the interval 671 to 702 (IGPSCLKFCSGRGQCTRHGCKCDPGFSGPACE). 2 disulfide bridges follow: C675–C685 and C692–C701. Residues 799 to 810 (HYSYDNGITWKL) form a BNR 2 repeat. A disulfide bridge links C895 with C937. Residues 952–963 (EYSANHGLTWHL) form a BNR 3 repeat. 3 disulfides stabilise this stretch: C968-C975, C1034-C1044, and C1051-C1060. Positions 1030 to 1061 (IGQQCPNMCSGHGSCDHGVCRCDQGYQGTECH) constitute an EGF-like 2 domain. The BNR 4 repeat unit spans residues 1157–1168 (QYSNNGGIQWHL). N-linked (GlcNAc...) asparagine glycosylation is present at N1267. Residues 1323–1334 (QYSHDAGMSWFL) form a BNR 5 repeat. Cystine bridges form between C1339–C1348, C1413–C1423, C1417–C1428, and C1430–C1441. The 34-residue stretch at 1409-1442 (ISEPCPSYCSGHGDCISGVCFCDLGYTAAQGTCV) folds into the EGF-like 3 domain. N-linked (GlcNAc...) asparagine glycosylation is present at N1447. Residues C1475 and C1522 are joined by a disulfide bond. Residues 1535–1546 (QYSNDNGILWHL) form a BNR 6 repeat. A glycan (N-linked (GlcNAc...) asparagine) is linked at N1600. Residues C1633 and C1673 are joined by a disulfide bond. One copy of the BNR 7 repeat lies at 1686 to 1697 (QYSLNNGKDWQL). Residues C1702 and C1709 are joined by a disulfide bond. N1750 is a glycosylation site (N-linked (GlcNAc...) asparagine). Residues 1765–1796 (LASGCPWMCSGRGICDSGRCVCDRGFGGPFCV) form the EGF-like 4 domain. A BNR 8 repeat occupies 1884-1895 (QFSVSGGVTWHL). N-linked (GlcNAc...) asparagine glycosylation is present at N1921. C1983 and C2030 are oxidised to a cystine. The stretch at 2043–2054 (EFSRDFGATWHL) is one BNR 9 repeat. A disulfide bond links C2059 and C2070. Zn(2+) contacts are provided by H2061 and H2074. Residues 2129–2161 (IGPQCEEMCYGHGSCINGTKCICDPGYSGPTCK) enclose the EGF-like 5 domain. 3 disulfide bridges follow: C2133–C2143, C2137–C2149, and C2151–C2160. N-linked (GlcNAc...) asparagine glycosylation is present at N2145. Residue E2179 participates in Zn(2+) binding. A disulfide bridge links C2195 with C2235. A BNR 10 repeat occupies 2250–2261 (QYSLNGGLSWSL). E2264 is a binding site for Zn(2+). N2269 and N2317 each carry an N-linked (GlcNAc...) asparagine glycan. 6 disulfides stabilise this stretch: C2348–C2387, C2393–C2559, C2482–C2492, C2486–C2497, C2499–C2508, and C2544–C2584. E2397, E2399, and H2460 together coordinate Zn(2+). A BNR 11 repeat occupies 2399–2410 (EYSVDLGLSWHP). In terms of domain architecture, EGF-like 6 spans 2478–2509 (IGDGCLDMCSGHGRCVQGSCVCDEQWGGLYCD). An N-linked (GlcNAc...) asparagine glycan is attached at N2569. 2 BNR repeats span residues 2598-2609 (EYSVNGGITWNL) and 2778-2789 (QFSTDFGVSWSY). A disulfide bond links C2794 and C2801. An EGF-like 7 domain is found at 2853–2884 (LGPGCLDNCGGHGDCLKEQCICDPGYSGPNCY). C2919 and C2966 are disulfide-bonded. N2962 carries an N-linked (GlcNAc...) asparagine glycan. The stretch at 2979 to 2990 (DFSTDGGITWTL) is one BNR 14 repeat. N3016 and N3073 each carry an N-linked (GlcNAc...) asparagine glycan. The BNR 15 repeat unit spans residues 3143–3155 (EYTKDARSDSWQL). C3160 and C3170 are disulfide-bonded. An N-linked (GlcNAc...) asparagine glycan is attached at N3185. In terms of domain architecture, EGF-like 8 spans 3228-3260 (IGEACPKLCSGHGYCTTGAVCICDESFQGDDCS). 4 disulfides stabilise this stretch: C3232–C3242, C3236–C3248, C3250–C3259, and C3296–C3346. The stretch at 3363-3374 (QYSVNNGITWHV) is one BNR 16 repeat. N-linked (GlcNAc...) asparagine glycosylation is found at N3412 and N3439.

It belongs to the reelin family. Oligomer of disulfide-linked homodimers. In terms of processing, N-glycosylated and to a lesser extent also O-glycosylated. As to expression, the major isoform 1 is neuron-specific. It is abundantly produced during brain ontogenesis by the Cajal-Retzius cells and other pioneer neurons located in the telencephalic marginal zone and by granule cells of the external granular layer of the cerebellum. Expression is located in deeper layers in the developing hippocampus and olfactory bulb, low levels of expression are also detected in the immature striatum. At early developmental stages, expressed also in hypothalamic differentiation fields, tectum and spinal cord. A moderate to low level of expression occurs in the septal area, striatal fields, habenular nuclei, some thalamic nuclei, particularly the lateral geniculate, the retina and some nuclei of the reticular formation in the central field of the medulla. Very low levels found in liver and kidney. No expression in radial glial cells, cortical plate, Purkinje cells and inferior olivary neurons. The minor isoform 2 is only expressed in non neuronal cells. The minor isoform 3 is found in the same cells as isoform 1, but is almost undetectable in retina and brain stem.

It is found in the secreted. The protein localises to the extracellular space. The protein resides in the extracellular matrix. In terms of biological role, extracellular matrix serine protease secreted by pioneer neurons that plays a role in layering of neurons in the cerebral cortex and cerebellum by coordinating cell positioning during neurodevelopment. Regulates microtubule function in neurons and neuronal migration. Binding to the extracellular domains of lipoprotein receptors VLDLR and LRP8/APOER2 induces tyrosine phosphorylation of DAB1 and modulation of TAU phosphorylation. Affects migration of sympathetic preganglionic neurons in the spinal cord, where it seems to act as a barrier to neuronal migration. Enzymatic activity is important for the modulation of cell adhesion. The protein is Reelin (Reln) of Mus musculus (Mouse).